We begin with the raw amino-acid sequence, 817 residues long: Two pore calcium channel protein 1 (817 aa).

Over 1-113 (MAVSLDDDVP…VHNHFFYMME (113 aa)) the chain is Cytoplasmic. Residues 20 to 65 (SAPLPPSNSLGQEQLPSKNGGSHSIHNSQVPSLVSGADSPPSSPTG) are disordered. A compositionally biased stretch (polar residues) spans 26–51 (SNSLGQEQLPSKNGGSHSIHNSQVPS). Residues 114 to 134 (LLTALLLLLLSLCESPAVPVL) form a helical membrane-spanning segment. Topologically, residues 135-137 (KLH) are extracellular. The chain crosses the membrane as a helical span at residues 138 to 158 (TYVHATLELFALMVVVFELCM). Residues 159–172 (KLRWLGFHTFVRHK) lie on the Cytoplasmic side of the membrane. A helical membrane pass occupies residues 173–193 (RTMVKTSVLVVQFIEAIVVLV). Over 194–202 (RQTSHVRVT) the chain is Extracellular. Residues 203–221 (RALRCIFLVDCRYCGGVRR) traverse the membrane as a helical segment. Residues 222-235 (NLRQIFQSLPPFMD) are Cytoplasmic-facing. The chain crosses the membrane as a helical span at residues 236–256 (ILLLLLFFMIIFAILGFYLFS). Residues 257-263 (TNPSDPY) are Extracellular-facing. An intramembrane region (helical; Pore-forming) is located at residues 264-287 (FSTLENSIVNLFVLLTTANFPDVM). The Extracellular portion of the chain corresponds to 288–298 (MPSYSRNPWSC). The helical transmembrane segment at 299 to 319 (VFFIVYLSIELYFIMNLLLAV) threads the bilayer. The Cytoplasmic portion of the chain corresponds to 320-445 (VFDTFNDIEK…NILVNSKAFQ (126 aa)). The helical transmembrane segment at 446 to 466 (YFMYLVVAVNGVWILVETFML) threads the bilayer. At 467–480 (KGGNFTSKHVPWSY) the chain is on the extracellular side. Asn470 carries N-linked (GlcNAc...) asparagine glycosylation. A helical transmembrane segment spans residues 481–501 (LVFLTIYGVELFMKVAGLGPV). The Cytoplasmic segment spans residues 502-504 (EYL). A helical membrane pass occupies residues 505–527 (SSGWNLFDFSVTAFAFLGLLALT). Residues 528–535 (LNMEPFYF) are Extracellular-facing. A helical transmembrane segment spans residues 536–550 (IVVLRPLQLLRLFKL). The Cytoplasmic portion of the chain corresponds to 551–569 (KKRYRNVLDTMFELLPRMA). A helical transmembrane segment spans residues 570 to 590 (SLGLTLLTFYYSFAIVGMEFF). At 591-630 (NGRLTPNCCNTSTVADAYRFINHTVGNKTKVEEGYYYLNN) the chain is on the extracellular side. Positions 631-654 (FDNILNSFVTLFELTVVNNWYIIM) form an intramembrane region, helical; Pore-forming. The Extracellular portion of the chain corresponds to 655 to 671 (EGVTSQTSHWSRLYFMT). The chain crosses the membrane as a helical span at residues 672–692 (FYIVTMVVMTIIVAFILEAFV). Residues 693–817 (FRMNYSRKSQ…GSRQRSQTVT (125 aa)) are Cytoplasmic-facing. Positions 770 to 794 (SLKMYQEEIQEWYEEHAREQEQQKL) form a coiled coil. Positions 785–817 (HAREQEQQKLRGSVPGPAAQQPPGSRQRSQTVT) are disordered. Over residues 806–817 (PPGSRQRSQTVT) the composition is skewed to polar residues.

This sequence belongs to the calcium channel alpha-1 subunit (TC 1.A.1.11) family. Two pore calcium channel subfamily. Dimer. Interacts with MTOR; the interaction is required for TPCN1 ATP sensitivity. Interacts with STX7, STX8 and STX12. Interacts with JPT2. Found in a complex with LSM12, TPCN1 and TPCN2. N-glycosylated. Mainly expressed in epithelial tissues like lung, kidney, colon, spleen and liver (at protein level).

The protein resides in the lysosome membrane. Its subcellular location is the endosome membrane. It localises to the early endosome membrane. It is found in the recycling endosome membrane. The enzyme catalyses Na(+)(in) = Na(+)(out). It catalyses the reaction Ca(2+)(in) = Ca(2+)(out). Na(+) current is inhibited by ATP in a MTORC-dependent manner. ATP sensitivity is independent of PI(3,5)P2. Probably regulated by Mg(2+) ions, cytosolic Mg(2+) selectively inhibits outward current while lysosomal Mg(2+) modestly inhibits both the outward and inward currents. In the absence of Mg(2+), NAADP readily activates TPCN2, with properties similar to PI(3,5)P2. Both current elicited by PI(3,5)P2 as well as NAADP are inhibited by tetrandrine. In terms of biological role, intracellular channel initially characterized as a non-selective Ca(2+)-permeable channel activated by NAADP (nicotinic acid adenine dinucleotide phosphate), it is also a voltage-gated highly-selective Na(+) channel activated directly by PI(3,5)P2 (phosphatidylinositol 3,5-bisphosphate) that senses pH changes and confers electrical excitability to organelles. Localizes to the early and recycling endosomes membranes where it plays a role in the uptake and processing of proteins and regulates organellar membrane excitability, membrane trafficking and pH homeostasis. Ion selectivity is not fixed but rather agonist-dependent and under defined ionic conditions, can be readily activated by both NAADP and PI(3,5)P2. Required for mTOR-dependent nutrient sensing. In Mus musculus (Mouse), this protein is Two pore calcium channel protein 1.